The sequence spans 404 residues: Putative Peroxidase 48 (404 aa).

The first 18 residues, 1-18 (MRFLGDYKFALLTCSVIA), serve as a signal peptide directing secretion. Intrachain disulfides connect C77/C156, C110/C115, C162/C397, and C241/C273. H108 functions as the Proton acceptor in the catalytic mechanism. 5 residues coordinate Ca(2+): D109, I112, G114, D116, and S118. N-linked (GlcNAc...) asparagine glycosylation occurs at N136. Substrate is bound at residue P204. Position 234 (H234) interacts with heme b. A Ca(2+)-binding site is contributed by S235. N-linked (GlcNAc...) asparagine glycosylation occurs at N250. The tract at residues 276-307 (SVSTSSPSAPPDIGLPPSLPASDSENSYGMSS) is disordered. Residues 283-294 (SAPPDIGLPPSL) are compositionally biased toward pro residues. D287 serves as a coordination point for Ca(2+). The span at 296–307 (ASDSENSYGMSS) shows a compositional bias: polar residues.

It belongs to the peroxidase family. Classical plant (class III) peroxidase subfamily. The cofactor is heme b. Ca(2+) is required as a cofactor.

The protein resides in the secreted. It carries out the reaction 2 a phenolic donor + H2O2 = 2 a phenolic radical donor + 2 H2O. In terms of biological role, removal of H(2)O(2), oxidation of toxic reductants, biosynthesis and degradation of lignin, suberization, auxin catabolism, response to environmental stresses such as wounding, pathogen attack and oxidative stress. These functions might be dependent on each isozyme/isoform in each plant tissue. This Arabidopsis thaliana (Mouse-ear cress) protein is Putative Peroxidase 48 (PER48).